We begin with the raw amino-acid sequence, 2159 residues long: ATP-binding cassette sub-family A member 7 (2159 aa).

A helical transmembrane segment spans residues 22-42; it reads PIQLLVELLWPLFLFFILVAV. Residues 43 to 546 are Extracellular-facing; the sequence is RHSHPPLEHH…DVFLRVLSRS (504 aa). A disulfide bond links cysteine 75 and cysteine 222. N-linked (GlcNAc...) asparagine glycosylation is present at asparagine 309. The next 6 membrane-spanning stretches (helical) occupy residues 547 to 567, 590 to 610, 623 to 643, 652 to 672, 678 to 698, and 732 to 752; these read LPLF…KAVV, LGWF…LVLV, VVIF…SFLL, LAAA…VLCV, LHLG…GFGC, and AFLL…EAVC. Positions 804–1035 constitute an ABC transporter 1 domain; it reads VSIRGLKKHF…LGCGYYLTLV (232 aa). 838–845 provides a ligand contact to ATP; sequence GHNGAGKT. A helical membrane pass occupies residues 846–866; sequence TTLSILSGLFPPSSGSASILG. 2 disordered regions span residues 1042 to 1088 and 1172 to 1192; these read VTHD…GAVP and GGDS…PTGP. A compositionally biased stretch (basic and acidic residues) spans 1044-1061; the sequence is HDAKGDSEDPRREKKSDG. Polar residues predominate over residues 1062–1081; it reads NGRTSDTAFTRGTSDKSNQA. A helical transmembrane segment spans residues 1246–1266; the sequence is VVLPALFVGLALFFSLIVPPF. The Extracellular segment spans residues 1267-1551; the sequence is GQYPPLQLSP…TLIASSVDVL (285 aa). Cysteine 1359 and cysteine 1373 are joined by a disulfide. 5 consecutive transmembrane segments (helical) span residues 1552 to 1572, 1598 to 1618, 1635 to 1655, 1663 to 1683, and 1743 to 1763; these read VSIC…LVLI, FLWD…IFLA, LLLL…SFFF, VVLT…TFVL, and IIGK…LITL. An ABC transporter 2 domain is found at 1807–2039; it reads LVLRDLTKVY…FGAGHTLTLR (233 aa). ATP is bound at residue 1841 to 1848; it reads GVNGAGKT. The interval 2118 to 2159 is disordered; the sequence is QGEEEESSRQEAEEEEVSKPGRQHPKRVSRFLEDPSSVETMI. Residues 2119–2133 show a composition bias toward acidic residues; the sequence is GEEEESSRQEAEEEE.

The protein belongs to the ABC transporter superfamily. ABCA family. N-glycosylated. Widely expressed with higher expression in brain, lung, adrenal gland, spleen and hematopoietic tissues (at protein level). In the brain, expressed in cortex, cerebellum, hippocampus, olfactory bulb, neurons, astrocytes and microglia (at protein level). Also expressed in adipocytes and macrophages (at protein level). Expressed in thymocytes (at protein level). Highly expressed in spleen and hematopoietic tissues. Expressed in brain, lung, macrophages, microglia, oligodendrocytes and neurons.

It localises to the cell membrane. It is found in the golgi apparatus membrane. Its subcellular location is the early endosome membrane. The protein localises to the cytoplasm. The protein resides in the cell projection. It localises to the ruffle membrane. It is found in the phagocytic cup. Its function is as follows. Probable ATP-binding cassette (ABC) transporter that plays a role in lipid homeostasis and macrophage-mediated phagocytosis. Binds APOA1 and may function in apolipoprotein-mediated phospholipid efflux from cells. May also mediate cholesterol efflux. May regulate cellular ceramide homeostasis during keratinocyte differentiation. Involved in lipid raft organization and CD1D localization on thymocytes and antigen-presenting cells, which plays an important role in natural killer T-cell development and activation. Plays a role in phagocytosis of apoptotic cells by macrophages. Macrophage phagocytosis is stimulated by APOA1 or APOA2, probably by stabilization of ABCA7. Also involved in phagocytic clearance of amyloid-beta by microglia cells and macrophages. Further limits amyloid-beta production by playing a role in the regulation of amyloid-beta A4 precursor protein (APP) endocytosis and/or processing. The polypeptide is ATP-binding cassette sub-family A member 7 (Abca7) (Mus musculus (Mouse)).